The chain runs to 240 residues: Ornithine decarboxylase antizyme (240 aa).

Disordered stretches follow at residues 18-45 and 69-95; these read RSEP…SSAG and DHDR…SSEF. The span at 21 to 33 shows a compositional bias: polar residues; the sequence is PISSSNRATKRTI. Residues 34–43 are compositionally biased toward low complexity; it reads SSSSSSSSSS. A compositionally biased stretch (basic and acidic residues) spans 69–84; sequence DHDRASPLKEYNRKTS. Polar residues predominate over residues 85–95; that stretch reads IDSTTTASSEF.

It belongs to the ODC antizyme family. In terms of assembly, interacts with ODC1 and thereby sterically blocks ODC homodimerization. Preferentially expressed in adult female midguts.

Ornithine decarboxylase (ODC) antizyme protein that negatively regulates ODC activity and intracellular polyamine biosynthesis and uptake in response to increased intracellular polyamine levels. Binds to ODC monomers, inhibiting the assembly of the functional ODC homodimer, and targets the monomers for ubiquitin-independent proteolytic destruction by the 26S proteasome. In Aedes aegypti (Yellowfever mosquito), this protein is Ornithine decarboxylase antizyme (Oda).